The sequence spans 94 residues: Aspartyl/glutamyl-tRNA(Asn/Gln) amidotransferase subunit C (94 aa).

This sequence belongs to the GatC family. In terms of assembly, heterotrimer of A, B and C subunits.

It catalyses the reaction L-glutamyl-tRNA(Gln) + L-glutamine + ATP + H2O = L-glutaminyl-tRNA(Gln) + L-glutamate + ADP + phosphate + H(+). It carries out the reaction L-aspartyl-tRNA(Asn) + L-glutamine + ATP + H2O = L-asparaginyl-tRNA(Asn) + L-glutamate + ADP + phosphate + 2 H(+). Allows the formation of correctly charged Asn-tRNA(Asn) or Gln-tRNA(Gln) through the transamidation of misacylated Asp-tRNA(Asn) or Glu-tRNA(Gln) in organisms which lack either or both of asparaginyl-tRNA or glutaminyl-tRNA synthetases. The reaction takes place in the presence of glutamine and ATP through an activated phospho-Asp-tRNA(Asn) or phospho-Glu-tRNA(Gln). This is Aspartyl/glutamyl-tRNA(Asn/Gln) amidotransferase subunit C from Caldicellulosiruptor bescii (strain ATCC BAA-1888 / DSM 6725 / KCTC 15123 / Z-1320) (Anaerocellum thermophilum).